The chain runs to 728 residues: 1,4-alpha-glucan branching enzyme GlgB (728 aa).

Aspartate 405 (nucleophile) is an active-site residue. The Proton donor role is filled by glutamate 458.

Belongs to the glycosyl hydrolase 13 family. GlgB subfamily. As to quaternary structure, monomer.

It carries out the reaction Transfers a segment of a (1-&gt;4)-alpha-D-glucan chain to a primary hydroxy group in a similar glucan chain.. It participates in glycan biosynthesis; glycogen biosynthesis. Functionally, catalyzes the formation of the alpha-1,6-glucosidic linkages in glycogen by scission of a 1,4-alpha-linked oligosaccharide from growing alpha-1,4-glucan chains and the subsequent attachment of the oligosaccharide to the alpha-1,6 position. This Salmonella paratyphi B (strain ATCC BAA-1250 / SPB7) protein is 1,4-alpha-glucan branching enzyme GlgB.